The sequence spans 415 residues: Glutamyl-tRNA reductase (415 aa).

Residues Thr49–Arg52, Ser104, Glu109–Gln111, and Gln115 each bind substrate. Cys50 (nucleophile) is an active-site residue. Position 184–189 (Gly184–Ile189) interacts with NADP(+).

It belongs to the glutamyl-tRNA reductase family. In terms of assembly, homodimer.

The catalysed reaction is (S)-4-amino-5-oxopentanoate + tRNA(Glu) + NADP(+) = L-glutamyl-tRNA(Glu) + NADPH + H(+). It functions in the pathway porphyrin-containing compound metabolism; protoporphyrin-IX biosynthesis; 5-aminolevulinate from L-glutamyl-tRNA(Glu): step 1/2. Functionally, catalyzes the NADPH-dependent reduction of glutamyl-tRNA(Glu) to glutamate 1-semialdehyde (GSA). In Neisseria gonorrhoeae (strain ATCC 700825 / FA 1090), this protein is Glutamyl-tRNA reductase.